The primary structure comprises 91 residues: Large ribosomal subunit protein uL22 (91 aa).

Belongs to the universal ribosomal protein uL22 family. Part of the 50S ribosomal subunit.

This protein binds specifically to 23S rRNA; its binding is stimulated by other ribosomal proteins, e.g. L4, L17, and L20. It is important during the early stages of 50S assembly. It makes multiple contacts with different domains of the 23S rRNA in the assembled 50S subunit and ribosome. Its function is as follows. The globular domain of the protein is located near the polypeptide exit tunnel on the outside of the subunit, while an extended beta-hairpin is found that lines the wall of the exit tunnel in the center of the 70S ribosome. The polypeptide is Large ribosomal subunit protein uL22 (rplV) (Clover yellow edge phytoplasma).